An 807-amino-acid polypeptide reads, in one-letter code: Glycerol-3-phosphate acyltransferase (807 aa).

Positions 305 to 310 (CHRSHM) match the HXXXXD motif motif.

It belongs to the GPAT/DAPAT family.

The protein resides in the cell inner membrane. The enzyme catalyses sn-glycerol 3-phosphate + an acyl-CoA = a 1-acyl-sn-glycero-3-phosphate + CoA. It participates in phospholipid metabolism; CDP-diacylglycerol biosynthesis; CDP-diacylglycerol from sn-glycerol 3-phosphate: step 1/3. This is Glycerol-3-phosphate acyltransferase from Aliivibrio salmonicida (strain LFI1238) (Vibrio salmonicida (strain LFI1238)).